Reading from the N-terminus, the 354-residue chain is Rhodopsin (354 aa).

The Extracellular segment spans residues 1 to 36; the sequence is MNGTEGPNFYVPMSNKTGVVRSPFDYPQYYLAEPWQ. N-linked (GlcNAc...) asparagine glycosylation is found at asparagine 2 and asparagine 15. A helical transmembrane segment spans residues 37 to 61; the sequence is YSALAAYMFLLILLGLPINFMTLFV. Topologically, residues 62-73 are cytoplasmic; sequence TIQHKKLRTPLN. A helical transmembrane segment spans residues 74–96; sequence YILLNLVFANHFMVLCGFTVTMY. Over 97 to 110 the chain is Extracellular; sequence TSMHGYFIFGPTGC. Residues cysteine 110 and cysteine 187 are joined by a disulfide bond. Residues 111-133 traverse the membrane as a helical segment; it reads YIEGFFATLGGEVALWSLVVLAV. A 'Ionic lock' involved in activated form stabilization motif is present at residues 134-136; that stretch reads ERY. Residues 134 to 152 lie on the Cytoplasmic side of the membrane; it reads ERYIVVCKPMANFRFGENH. The chain crosses the membrane as a helical span at residues 153-173; sequence AIMGVAFTWIMALSCAAPPLF. At 174–202 the chain is on the extracellular side; it reads GWSRYIPEGMQCSCGVDYYTLKPEVNNES. A helical transmembrane segment spans residues 203–224; sequence FVIYMFIVHFTIPLIVIFFCYG. The Cytoplasmic segment spans residues 225 to 252; the sequence is RLLCTVKEAAAQQQESLTTQKAEKEVTR. The chain crosses the membrane as a helical span at residues 253 to 274; sequence MVVIMVVFFLICWVPYAYVAFY. Over 275 to 286 the chain is Extracellular; sequence IFTHQGSNFGPV. A helical membrane pass occupies residues 287-308; that stretch reads FMTVPAFFAKSSAIYNPVIYIV. At lysine 296 the chain carries N6-(retinylidene)lysine. Topologically, residues 309–354 are cytoplasmic; the sequence is LNKQFRNCLITTLCCGKNPFGDEDGSSAATSKTEASSVSSSQVSPA. 2 S-palmitoyl cysteine lipidation sites follow: cysteine 322 and cysteine 323. Residues 331-354 are disordered; the sequence is EDGSSAATSKTEASSVSSSQVSPA. Positions 334–354 are enriched in low complexity; the sequence is SSAATSKTEASSVSSSQVSPA.

Belongs to the G-protein coupled receptor 1 family. Opsin subfamily. Post-translationally, contains one covalently linked retinal chromophore. Upon light absorption, the covalently bound 11-cis-retinal is converted to all-trans-retinal. After hydrolysis of the Schiff base and release of the covalently bound all-trans-retinal, active rhodopsin is regenerated by binding of a fresh molecule of 11-cis-retinal.

The protein resides in the membrane. Its subcellular location is the cell projection. It is found in the cilium. The protein localises to the photoreceptor outer segment. Functionally, photoreceptor required for image-forming vision at low light intensity. Required for photoreceptor cell viability after birth. Light-induced isomerization of 11-cis to all-trans retinal triggers a conformational change that activates signaling via G-proteins. Subsequent receptor phosphorylation mediates displacement of the bound G-protein alpha subunit by arrestin and terminates signaling. This is Rhodopsin (rho) from Xenopus laevis (African clawed frog).